The following is a 545-amino-acid chain: Membrane protein insertase YidC (545 aa).

The helical transmembrane segment at 6 to 26 (NLLLIALLFVSFMIWQAWQTD) threads the bilayer. The disordered stretch occupies residues 31–54 (PVAQTTQQTSNPATGDAASSAVPA). A run of 4 helical transmembrane segments spans residues 342-362 (KFIH…TFIV), 417-437 (LGGC…YYML), 455-475 (LSAQ…MFFI), and 496-516 (PVIF…YYIV).

Belongs to the OXA1/ALB3/YidC family. Type 1 subfamily. As to quaternary structure, interacts with the Sec translocase complex via SecD. Specifically interacts with transmembrane segments of nascent integral membrane proteins during membrane integration.

It is found in the cell inner membrane. Required for the insertion and/or proper folding and/or complex formation of integral membrane proteins into the membrane. Involved in integration of membrane proteins that insert both dependently and independently of the Sec translocase complex, as well as at least some lipoproteins. Aids folding of multispanning membrane proteins. This chain is Membrane protein insertase YidC, found in Serratia proteamaculans (strain 568).